A 182-amino-acid polypeptide reads, in one-letter code: Lipoprotein signal peptidase (182 aa).

The next 3 helical transmembrane spans lie at 21–41 (LLLSVAATVLALDIVTKVLAV), 74–94 (GYTWVLTLIATGVVVGIFWMG), and 98–118 (VSPWWAVGLGMILGGAMGNLV). Residues D134 and D148 contribute to the active site. The chain crosses the membrane as a helical span at residues 146 to 166 (VADPSVVGGAILLVVLSIFGY).

Belongs to the peptidase A8 family.

Its subcellular location is the cell membrane. It carries out the reaction Release of signal peptides from bacterial membrane prolipoproteins. Hydrolyzes -Xaa-Yaa-Zaa-|-(S,diacylglyceryl)Cys-, in which Xaa is hydrophobic (preferably Leu), and Yaa (Ala or Ser) and Zaa (Gly or Ala) have small, neutral side chains.. It functions in the pathway protein modification; lipoprotein biosynthesis (signal peptide cleavage). Its function is as follows. This protein specifically catalyzes the removal of signal peptides from prolipoproteins. The chain is Lipoprotein signal peptidase from Mycobacterium avium (strain 104).